The chain runs to 713 residues: Bifunctional protein gal10 (713 aa).

Residues 1-350 (MAVQDEYILV…TIENPFGFQI (350 aa)) form a galactowaldenase region. 7–38 (YILVTGGAGYIGSHTVIELINHGYKVIIVDNL) lines the NAD(+) pocket. Positions 351–713 (DNYKWKLFNT…SASYNSGEYY (363 aa)) are mutarotase. The active-site For mutarotase activity is the His-532.

The protein in the N-terminal section; belongs to the NAD(P)-dependent epimerase/dehydratase family. In the C-terminal section; belongs to the aldose epimerase family. The cofactor is NAD(+).

It carries out the reaction UDP-alpha-D-glucose = UDP-alpha-D-galactose. The enzyme catalyses alpha-D-glucose = beta-D-glucose. It functions in the pathway carbohydrate metabolism; galactose metabolism. It participates in carbohydrate metabolism; hexose metabolism. In terms of biological role, mutarotase converts alpha-aldose to the beta-anomer. It is active on D-glucose, L-arabinose, D-xylose, D-galactose, maltose and lactose. This is Bifunctional protein gal10 (gal10) from Schizosaccharomyces pombe (strain 972 / ATCC 24843) (Fission yeast).